Reading from the N-terminus, the 123-residue chain is DNA-directed RNA polymerase subunit omega (123 aa).

The segment at 67–123 (EESAADSLSLGGFSTADVEAEVGGGPVQPDPGASQERAFDEAADGTAQGSGDPDPTT) is disordered.

Belongs to the RNA polymerase subunit omega family. The RNAP catalytic core consists of 2 alpha, 1 beta, 1 beta' and 1 omega subunit. When a sigma factor is associated with the core the holoenzyme is formed, which can initiate transcription.

It catalyses the reaction RNA(n) + a ribonucleoside 5'-triphosphate = RNA(n+1) + diphosphate. Its function is as follows. Promotes RNA polymerase assembly. Latches the N- and C-terminal regions of the beta' subunit thereby facilitating its interaction with the beta and alpha subunits. In Halorhodospira halophila (strain DSM 244 / SL1) (Ectothiorhodospira halophila (strain DSM 244 / SL1)), this protein is DNA-directed RNA polymerase subunit omega.